We begin with the raw amino-acid sequence, 292 residues long: tRNA pseudouridine synthase B (292 aa).

The active-site Nucleophile is the Asp-38.

It belongs to the pseudouridine synthase TruB family. Type 1 subfamily.

The enzyme catalyses uridine(55) in tRNA = pseudouridine(55) in tRNA. Functionally, responsible for synthesis of pseudouridine from uracil-55 in the psi GC loop of transfer RNAs. The protein is tRNA pseudouridine synthase B of Streptococcus pneumoniae serotype 2 (strain D39 / NCTC 7466).